We begin with the raw amino-acid sequence, 366 residues long: Protein FAM110B (366 aa).

Disordered regions lie at residues 127 to 150 (SSEGSSSGSGHKHSSRNWPPHRDT), 163 to 182 (KVYPTPGRGSPQESSSHVSR), and 214 to 253 (IPCSSSAPPLPPKPKVAAMKSPDADQVEPACGVSRRPSLQ). 2 positions are modified to phosphoserine: Ser234 and Ser297. The tract at residues 313 to 333 (DCEQSQDSNSDLRNDDSANDR) is disordered. The segment covering 322-331 (SDLRNDDSAN) has biased composition (basic and acidic residues).

The protein belongs to the FAM110 family.

It localises to the cytoplasm. The protein resides in the cytoskeleton. It is found in the microtubule organizing center. Its subcellular location is the centrosome. This is Protein FAM110B (Fam110b) from Rattus norvegicus (Rat).